We begin with the raw amino-acid sequence, 63 residues long: Large ribosomal subunit protein bL28 (63 aa).

This sequence belongs to the bacterial ribosomal protein bL28 family.

This is Large ribosomal subunit protein bL28 from Thermomicrobium roseum (strain ATCC 27502 / DSM 5159 / P-2).